Consider the following 685-residue polypeptide: MELLRTITYQPAASTKMCEQALGKGCGADSKKKRPPQPPEESQPPQSQAQVPPAAAHHHHHHSHSGPEISRIIVDPTTGKRYCRGKVLGKGGFAKCYEMTDLTNNKVYAAKIIPHSRVAKPHQREKIDKEIELHRILHHKHVVQFYHYFEDKENIYILLEYCSRRSMAHILKARKVLTEPEVRYYLRQIVSGLKYLHEQEILHRDLKLGNFFINEAMELKVGDFGLAARLEPLEHRRRTICGTPNYLSPEVLNKQGHGCESDIWALGCVMYTMLLGRPPFETTNLKETYRCIREARYTMPSSLLAPAKHLIASMLSKNPEDRPSLDDIIRHDFFLQGFTPDRLSSSCCHTVPDFHLSSPAKNFFKKAAAALFGGKKDKARYIDTHNRVSKEDEDIYKLRHDLKKTSITQQPSKHRTDEELQPPTTTVARSGTPAVENKQQIGDAIRMIVRGTLGSCSSSSECLEDSTMGSVADTVARVLRGCLENMPEADCIPKEQLSTSFQWVTKWVDYSNKYGFGYQLSDHTVGVLFNNGAHMSLLPDKKTVHYYAELGQCSVFPATDAPEQFISQVTVLKYFSHYMEENLMDGGDLPSVTDIRRPRLYLLQWLKSDKALMMLFNDGTFQVNFYHDHTKIIICSQNEEYLLTYINEDRISTTFRLTTLLMSGCSLELKNRMEYALNMLLQRCN.

A disordered region spans residues 24–71; that stretch reads KGCGADSKKKRPPQPPEESQPPQSQAQVPPAAAHHHHHHSHSGPEISR. Low complexity predominate over residues 43–55; it reads QPPQSQAQVPPAA. The region spanning 82-334 is the Protein kinase domain; it reads YCRGKVLGKG…LDDIIRHDFF (253 aa). Residues 88 to 96 and K111 each bind ATP; that span reads LGKGGFAKC. Catalysis depends on D205, which acts as the Proton acceptor. Position 239 is a phosphothreonine (T239). The tract at residues 406–433 is disordered; the sequence is SITQQPSKHRTDEELQPPTTTVARSGTP. POLO box domains are found at residues 503–581 and 601–685; these read WVTK…YMEE and YLLQ…QRCN.

This sequence belongs to the protein kinase superfamily. Ser/Thr protein kinase family. CDC5/Polo subfamily. Interacts with NSF; causing NSF dissociation from GRIA2. Interacts with CIB1. In terms of processing, catalytic activity is enhanced by phosphorylation of Thr-239.

It is found in the cytoplasm. Its subcellular location is the cytoskeleton. The protein localises to the microtubule organizing center. The protein resides in the centrosome. It localises to the centriole. It is found in the cell projection. Its subcellular location is the dendrite. The enzyme catalyses L-seryl-[protein] + ATP = O-phospho-L-seryl-[protein] + ADP + H(+). It catalyses the reaction L-threonyl-[protein] + ATP = O-phospho-L-threonyl-[protein] + ADP + H(+). Activated by phosphorylation of Thr-239. Once activated, activity is stimulated by binding target proteins. Functionally, tumor suppressor serine/threonine-protein kinase involved in synaptic plasticity, centriole duplication and G1/S phase transition. Polo-like kinases act by binding and phosphorylating proteins that are already phosphorylated on a specific motif recognized by the POLO box domains. Phosphorylates CPAP, NPM1, RAPGEF2, RASGRF1, SNCA, SIPA1L1 and SYNGAP1. Plays a key role in synaptic plasticity and memory by regulating the Ras and Rap protein signaling: required for overactivity-dependent spine remodeling by phosphorylating the Ras activator RASGRF1 and the Rap inhibitor SIPA1L1 leading to their degradation by the proteasome. Conversely, phosphorylates the Rap activator RAPGEF2 and the Ras inhibitor SYNGAP1, promoting their activity. Also regulates synaptic plasticity independently of kinase activity, via its interaction with NSF that disrupts the interaction between NSF and the GRIA2 subunit of AMPARs, leading to a rapid rundown of AMPAR-mediated current that occludes long term depression. Required for procentriole formation and centriole duplication by phosphorylating CPAP and NPM1, respectively. Its induction by p53/TP53 suggests that it may participate in the mitotic checkpoint following stress. The polypeptide is Serine/threonine-protein kinase PLK2 (PLK2) (Pongo abelii (Sumatran orangutan)).